Consider the following 349-residue polypeptide: Paired box protein Pax-4 (349 aa).

Residues 5-131 (GLSSVNQLGG…SSINRVLRAL (127 aa)) constitute a DNA-binding region (paired). The PAI subdomain stretch occupies residues 8–64 (SVNQLGGLFVNGRPLPLDTRQQIVQLAIRGMRPCDISRSLKVSNGCVSKILGRYYRT). Residues 83-131 (AVVARIAQLKDEYPALFAWEIQHQLCTEGLCTQDKAPSVSSINRVLRAL) are RED subdomain. The segment at residues 170–229 (SHRNRTIFSPGQAEALEKEFQRGQYPDSVARGKLAAATSLPEDTVRVWFSNRRAKWRRQE) is a DNA-binding region (homeobox). Residues 278 to 349 (FCQLCCGTAP…VPSTHCSNWP (72 aa)) are transcription repression.

It belongs to the paired homeobox family. In terms of tissue distribution, expressed in early pancreas. Later restricted to beta cells. Undetectable in adult islets.

It localises to the nucleus. In terms of biological role, plays an important role in the differentiation and development of pancreatic islet beta cells. Transcriptional repressor that competes with PAX6 in binding to a common element in the glucagon, insulin and somatostatin promoters. This is Paired box protein Pax-4 (Pax4) from Mus musculus (Mouse).